The following is a 749-amino-acid chain: Transcription factor RFX3 (749 aa).

The RFX-type winged-helix DNA-binding region spans 183 to 258 (HLQWLLDNYE…YHYYGIRVKP (76 aa)). The tract at residues 663–699 (VSPGNLDKDEGSEVESEMDEELDDSSEPQAKREKTEL) is disordered. The segment covering 674 to 688 (SEVESEMDEELDDSS) has biased composition (acidic residues).

It belongs to the RFX family. As to quaternary structure, heterodimer; heterodimerizes with RFX1 and RFX2, and RFX6.

It localises to the nucleus. Functionally, transcription factor required for ciliogenesis and islet cell differentiation during endocrine pancreas development. Essential for the differentiation of nodal monocilia and left-right asymmetry specification during embryogenesis. Required for the biogenesis of motile cilia by governing growth and beating efficiency of motile cells. Also required for ciliated ependymal cell differentiation. Regulates the expression of genes involved in ciliary assembly (DYNC2LI1, FOXJ1 and BBS4) and genes involved in ciliary motility (DNAH11, DNAH9 and DNAH5). Together with RFX6, participates in the differentiation of 4 of the 5 islet cell types during endocrine pancreas development, with the exception of pancreatic PP (polypeptide-producing) cells. Regulates transcription by forming a heterodimer with another RFX protein and binding to the X-box in the promoter of target genes. Represses transcription of MAP1A in non-neuronal cells but not in neuronal cells. The protein is Transcription factor RFX3 (RFX3) of Macaca fascicularis (Crab-eating macaque).